A 448-amino-acid polypeptide reads, in one-letter code: Histidinol dehydrogenase (448 aa).

NAD(+)-binding residues include Y136, Q197, and N220. Substrate is bound by residues S243, Q265, and H268. Zn(2+) contacts are provided by Q265 and H268. Active-site proton acceptor residues include E333 and H334. 4 residues coordinate substrate: H334, D367, E421, and H426. D367 provides a ligand contact to Zn(2+). H426 lines the Zn(2+) pocket.

This sequence belongs to the histidinol dehydrogenase family. Zn(2+) serves as cofactor.

The enzyme catalyses L-histidinol + 2 NAD(+) + H2O = L-histidine + 2 NADH + 3 H(+). It participates in amino-acid biosynthesis; L-histidine biosynthesis; L-histidine from 5-phospho-alpha-D-ribose 1-diphosphate: step 9/9. Its function is as follows. Catalyzes the sequential NAD-dependent oxidations of L-histidinol to L-histidinaldehyde and then to L-histidine. The sequence is that of Histidinol dehydrogenase from Pseudomonas savastanoi pv. phaseolicola (strain 1448A / Race 6) (Pseudomonas syringae pv. phaseolicola (strain 1448A / Race 6)).